Consider the following 178-residue polypeptide: Actin-related protein 2/3 complex subunit 3 (178 aa).

Residue lysine 29 forms a Glycyl lysine isopeptide (Lys-Gly) (interchain with G-Cter in ubiquitin) linkage.

The protein belongs to the ARPC3 family. In terms of assembly, component of the Arp2/3 complex composed of ARP2, ARP3, ARC40/p41-ARC, ARC35/p34-ARC, ARC18/p21-ARC, ARC19/p20-ARC and ARC16/p16-ARC.

The protein resides in the cytoplasm. Its subcellular location is the cytoskeleton. In terms of biological role, functions as a component of the Arp2/3 complex which is involved in regulation of actin polymerization and together with an activating nucleation-promoting factor (NPF) mediates the formation of branched actin networks. The sequence is that of Actin-related protein 2/3 complex subunit 3 (ARC18) from Saccharomyces cerevisiae (strain ATCC 204508 / S288c) (Baker's yeast).